Consider the following 136-residue polypeptide: ATP synthase F(0) complex subunit C1, mitochondrial (136 aa).

Residues 1–61 (MQTTKALLIS…REFQTSVISR (61 aa)) constitute a mitochondrion transit peptide. A helical transmembrane segment spans residues 77–97 (VGVAGSGAGIGTVFGSLIIGY). K104 carries the N6,N6,N6-trimethyllysine modification. The chain crosses the membrane as a helical span at residues 112 to 132 (ILGFALSEAMGLFCLMVAFLI).

This sequence belongs to the ATPase C chain family. In terms of assembly, homooctamer; the c-ring consists of eight c subunits forming a circle, and each subunit adopts a hairpin shape. Component of the ATP synthase complex composed at least of ATP5F1A/subunit alpha, ATP5F1B/subunit beta, ATP5MC1/subunit c (homooctomer), MT-ATP6/subunit a, MT-ATP8/subunit 8, ATP5ME/subunit e, ATP5MF/subunit f, ATP5MG/subunit g, ATP5MK/subunit k, ATP5MJ/subunit j, ATP5F1C/subunit gamma, ATP5F1D/subunit delta, ATP5F1E/subunit epsilon, ATP5PF/subunit F6, ATP5PB/subunit b, ATP5PD/subunit d, ATP5PO/subunit OSCP. ATP synthase complex consists of a soluble F(1) head domain (subunits alpha(3) and beta(3)) - the catalytic core - and a membrane F(0) domain - the membrane proton channel (subunits c, a, 8, e, f, g, k and j). These two domains are linked by a central stalk (subunits gamma, delta, and epsilon) rotating inside the F1 region and a stationary peripheral stalk (subunits F6, b, d, and OSCP). Interacts with TMEM70 (homooligomer form); this interaction facilitates the oligomer formation of subunit c/ATP5MC1 (c-ring) and the c-ring membrane insertion and also protects ATP5MC1 against intramitochondrial proteolysis. Post-translationally, trimethylated by ATPSCKMT at Lys-104. Methylation is required for proper incorporation of the C subunit into the ATP synthase complex and mitochondrial respiration.

It is found in the mitochondrion membrane. The enzyme catalyses H(+)(in) = H(+)(out). Functionally, subunit c, of the mitochondrial membrane ATP synthase complex (F(1)F(0) ATP synthase or Complex V) that produces ATP from ADP in the presence of a proton gradient across the membrane which is generated by electron transport complexes of the respiratory chain. ATP synthase complex consist of a soluble F(1) head domain - the catalytic core - and a membrane F(1) domain - the membrane proton channel. These two domains are linked by a central stalk rotating inside the F(1) region and a stationary peripheral stalk. During catalysis, ATP synthesis in the catalytic domain of F(1) is coupled via a rotary mechanism of the central stalk subunits to proton translocation. With the subunit a (MT-ATP6), forms the proton-conducting channel in the F(0) domain, that contains two crucial half-channels (inlet and outlet) that facilitate proton movement from the mitochondrial intermembrane space (IMS) into the matrix. Protons are taken up via the inlet half-channel and released through the outlet half-channel, following a Grotthuss mechanism. This chain is ATP synthase F(0) complex subunit C1, mitochondrial, found in Rattus norvegicus (Rat).